A 394-amino-acid polypeptide reads, in one-letter code: Putative bacilysin exporter BacE (394 aa).

11 consecutive transmembrane segments (helical) span residues 11-31, 43-63, 69-89, 92-112, 142-162, 166-186, 215-235, 244-264, 288-308, 332-352, and 353-373; these read LLYG…ALLI, SGVI…GVLV, IKIM…LTFL, GEYP…GVFF, IIVG…ELAV, GVTY…FVPI, MFTM…FPIV, IGNF…AALV, LFLF…FFIA, IFSV…MFIN, and ILSA…LFLH.

It belongs to the major facilitator superfamily. Drug:H(+) antiporter-3 (DHA3) (TC 2.A.1.21) family.

It localises to the cell membrane. In terms of biological role, part of the bacilysin biosynthesis operon. May be involved in self-resistance to bacilysin by permitting efflux of this antibiotic. In Bacillus subtilis (strain 168), this protein is Putative bacilysin exporter BacE (bacE).